The following is a 245-amino-acid chain: Endo-chitosanase (245 aa).

The N-terminal stretch at 1–17 (MHFAGIVAIALATGATA) is a signal peptide.

Belongs to the glycosyl hydrolase 75 family.

The protein resides in the secreted. It catalyses the reaction Endohydrolysis of beta-(1-&gt;4)-linkages between D-glucosamine residues in a partly acetylated chitosan.. Chitosanase catalyzing the endo-type cleavage of chitosan, the deacylated form of chitin. Chitosanase may be crucial in the degradation of the deacetylated portion of chitin in the fungal cell wall. Chitoolisaccharides produced by the hydrolysis of partially N-acetylated chitosan are known to have many biological activities, including antibacterial activity, immune-enhancing effects, and elicitor activity. This is Endo-chitosanase (csn) from Aspergillus oryzae (strain ATCC 42149 / RIB 40) (Yellow koji mold).